The primary structure comprises 497 residues: FAD-linked oxidoreductase fmqD (497 aa).

An N-terminal signal peptide occupies residues 1–17 (MQYIPFLISGLVPVALS). The 176-residue stretch at 68–243 (NDPSYVATVK…TSATYRIYDQ (176 aa)) folds into the FAD-binding PCMH-type domain. N-linked (GlcNAc...) asparagine glycans are attached at residues asparagine 99, asparagine 261, and asparagine 288.

Belongs to the oxygen-dependent FAD-linked oxidoreductase family.

The protein localises to the secreted. It is found in the cell wall. It participates in alkaloid biosynthesis. In terms of biological role, FAD-linked oxidoreductase; part of the gene cluster that mediates the biosynthesis of the antitumor fumiquinazolines that confer a dual-usage capability to defend against phagocytes in the environment and animal hosts. The simplest member is fumiquinazoline F (FQF) with a 6-6-6 tricyclic core derived from anthranilic acid (Ant), tryptophan (Trp), and alanine (Ala). The trimodular NRPS fmqA is responsible for FQF formation. Modules 1, 2 and 3 of fmqA are predicted to activate and load Ant, Trp and Ala, respectively, providing for the assembly of an Ant-Trp-Ala-S-enzyme intermediate that would undergo double cyclization for chain release and generation of the tricyclic 6-6-6 product fumiquinazoline F. The presence of an E domain predicted for module 2 of fmqA is consistent with epimerization of L-Trp to D-Trp during assembly to generate the R-stereocenter at C14 of FQF. The FAD-dependent monooxygenase fmqB and the monomodular NRPS fmqC then maturate FQF to FQA. FmqB oxidizes the 2',3'-double bond of the indole side chain of FQF, and fmqC activates L-Ala as the adenylate, installs it as the pantetheinyl thioester on its carrier protein domain, and acylates the oxidized indole for subsequent intramolecular cyclization to create the 6-5-5-imidazolindolone of FQA. The FAD-linked oxidoreductase fmqD introduces a third layer of scaffold complexity by converting FQA to the spirohemiaminal FQC, presumably by catalyzing the formation of a transient imine within the pyrazinone ring. FQC subsequently converts nonenzymatically to the known cyclic aminal FQD. In Aspergillus fumigatus (strain ATCC MYA-4609 / CBS 101355 / FGSC A1100 / Af293) (Neosartorya fumigata), this protein is FAD-linked oxidoreductase fmqD.